We begin with the raw amino-acid sequence, 285 residues long: Small ribosomal subunit biogenesis GTPase RsgA (285 aa).

Residues 61 to 215 (KNQLIRPKVA…IIDSPGFSSF (155 aa)) enclose the CP-type G domain. Residues 110 to 113 (TKID) and 159 to 167 (GQTGVGKTS) contribute to the GTP site. 4 residues coordinate Zn(2+): C239, C244, H246, and C254.

It belongs to the TRAFAC class YlqF/YawG GTPase family. RsgA subfamily. As to quaternary structure, monomer. Associates with 30S ribosomal subunit, binds 16S rRNA. Requires Zn(2+) as cofactor.

The protein localises to the cytoplasm. In terms of biological role, one of several proteins that assist in the late maturation steps of the functional core of the 30S ribosomal subunit. Helps release RbfA from mature subunits. May play a role in the assembly of ribosomal proteins into the subunit. Circularly permuted GTPase that catalyzes slow GTP hydrolysis, GTPase activity is stimulated by the 30S ribosomal subunit. The chain is Small ribosomal subunit biogenesis GTPase RsgA from Mesomycoplasma hyopneumoniae (strain J / ATCC 25934 / NCTC 10110) (Mycoplasma hyopneumoniae).